The following is a 475-amino-acid chain: Ribulose bisphosphate carboxylase large chain (475 aa).

Residues 1–2 (MS) constitute a propeptide that is removed on maturation. P3 is modified (N-acetylproline). Residue K14 is modified to N6,N6,N6-trimethyllysine. N123 and T173 together coordinate substrate. K175 functions as the Proton acceptor in the catalytic mechanism. K177 contacts substrate. Mg(2+) is bound by residues K201, D203, and E204. K201 is modified (N6-carboxylysine). H294 functions as the Proton acceptor in the catalytic mechanism. 3 residues coordinate substrate: R295, H327, and S379.

The protein belongs to the RuBisCO large chain family. Type I subfamily. Heterohexadecamer of 8 large chains and 8 small chains; disulfide-linked. The disulfide link is formed within the large subunit homodimers. The cofactor is Mg(2+). In terms of processing, the disulfide bond which can form in the large chain dimeric partners within the hexadecamer appears to be associated with oxidative stress and protein turnover.

It is found in the plastid. The protein localises to the chloroplast. The enzyme catalyses 2 (2R)-3-phosphoglycerate + 2 H(+) = D-ribulose 1,5-bisphosphate + CO2 + H2O. It carries out the reaction D-ribulose 1,5-bisphosphate + O2 = 2-phosphoglycolate + (2R)-3-phosphoglycerate + 2 H(+). In terms of biological role, ruBisCO catalyzes two reactions: the carboxylation of D-ribulose 1,5-bisphosphate, the primary event in carbon dioxide fixation, as well as the oxidative fragmentation of the pentose substrate in the photorespiration process. Both reactions occur simultaneously and in competition at the same active site. This Pelargonium hortorum (Common geranium) protein is Ribulose bisphosphate carboxylase large chain.